Here is a 58-residue protein sequence, read N- to C-terminus: Sodium/potassium-transporting ATPase subunit gamma (58 aa).

The chain crosses the membrane as a helical span at residues Asn20 to Ser39.

The protein belongs to the FXYD family. As to quaternary structure, regulatory subunit of the sodium/potassium-transporting ATPase which is composed of a catalytic alpha subunit, an auxiliary non-catalytic beta subunit and an additional regulatory subunit. Highest levels expressed in the kidney and spleen. Restricted to the basolateral membrane in renal epithelial cells and varies in its level of expression along the nephron.

It localises to the membrane. In terms of biological role, may be involved in forming the receptor site for cardiac glycoside binding or may modulate the transport function of the sodium ATPase. The chain is Sodium/potassium-transporting ATPase subunit gamma (FXYD2) from Bos taurus (Bovine).